The primary structure comprises 167 residues: uncharacterized protein (167 aa).

An N-acetyltransferase domain is found at Met-1–Asp-148.

This sequence belongs to the acetyltransferase family.

This is an uncharacterized protein from Escherichia coli O157:H7.